The primary structure comprises 195 residues: Probable chemoreceptor glutamine deamidase CheD 2 (195 aa).

Belongs to the CheD family.

It catalyses the reaction L-glutaminyl-[protein] + H2O = L-glutamyl-[protein] + NH4(+). Functionally, probably deamidates glutamine residues to glutamate on methyl-accepting chemotaxis receptors (MCPs), playing an important role in chemotaxis. This chain is Probable chemoreceptor glutamine deamidase CheD 2, found in Burkholderia thailandensis (strain ATCC 700388 / DSM 13276 / CCUG 48851 / CIP 106301 / E264).